The chain runs to 203 residues: Urease accessory protein UreG (203 aa).

14-21 provides a ligand contact to GTP; that stretch reads GPVGSGKT.

This sequence belongs to the SIMIBI class G3E GTPase family. UreG subfamily. As to quaternary structure, homodimer. UreD, UreF and UreG form a complex that acts as a GTP-hydrolysis-dependent molecular chaperone, activating the urease apoprotein by helping to assemble the nickel containing metallocenter of UreC. The UreE protein probably delivers the nickel.

It localises to the cytoplasm. In terms of biological role, facilitates the functional incorporation of the urease nickel metallocenter. This process requires GTP hydrolysis, probably effectuated by UreG. This Rhizobium rhizogenes (strain K84 / ATCC BAA-868) (Agrobacterium radiobacter) protein is Urease accessory protein UreG.